Reading from the N-terminus, the 403-residue chain is Phosphoglycerate kinase (403 aa).

Substrate contacts are provided by residues 21–23, arginine 36, 59–62, arginine 119, and arginine 154; these read DFN and HLGR. Residues lysine 207, glycine 299, glutamate 330, and 357–360 each bind ATP; that span reads GGDA.

This sequence belongs to the phosphoglycerate kinase family. As to quaternary structure, monomer.

The protein localises to the cytoplasm. It carries out the reaction (2R)-3-phosphoglycerate + ATP = (2R)-3-phospho-glyceroyl phosphate + ADP. Its pathway is carbohydrate degradation; glycolysis; pyruvate from D-glyceraldehyde 3-phosphate: step 2/5. The protein is Phosphoglycerate kinase (pgk) of Chlamydia muridarum (strain MoPn / Nigg).